The primary structure comprises 496 residues: NADP-dependent glyceraldehyde-3-phosphate dehydrogenase (496 aa).

Ala-2 is modified (N-acetylalanine). Phosphothreonine is present on Thr-4. Substrate-binding positions include Arg-116 and 169-170 (NY). NADP(+)-binding residues include Lys-192, Thr-195, and Asp-230. 245-249 (GGDTG) provides a ligand contact to NAD(+). The Proton acceptor role is filled by Glu-264. 297-299 (RCT) contributes to the substrate binding site. Cys-298 functions as the Nucleophile in the catalytic mechanism. An NADP(+)-binding site is contributed by Glu-391. Residue Arg-451 coordinates substrate.

It belongs to the aldehyde dehydrogenase family.

The protein localises to the cytoplasm. It carries out the reaction D-glyceraldehyde 3-phosphate + NADP(+) + H2O = (2R)-3-phosphoglycerate + NADPH + 2 H(+). In terms of biological role, important as a means of generating NADPH for biosynthetic reactions. The sequence is that of NADP-dependent glyceraldehyde-3-phosphate dehydrogenase (ALDH11A3) from Arabidopsis thaliana (Mouse-ear cress).